A 285-amino-acid chain; its full sequence is 2-dehydro-3-deoxyphosphooctonate aldolase (285 aa).

The protein belongs to the KdsA family.

It localises to the cytoplasm. The enzyme catalyses D-arabinose 5-phosphate + phosphoenolpyruvate + H2O = 3-deoxy-alpha-D-manno-2-octulosonate-8-phosphate + phosphate. It participates in carbohydrate biosynthesis; 3-deoxy-D-manno-octulosonate biosynthesis; 3-deoxy-D-manno-octulosonate from D-ribulose 5-phosphate: step 2/3. Its pathway is bacterial outer membrane biogenesis; lipopolysaccharide biosynthesis. The polypeptide is 2-dehydro-3-deoxyphosphooctonate aldolase (Acinetobacter baumannii (strain AB307-0294)).